Consider the following 393-residue polypeptide: Yellow-related salivary protein SP03B (393 aa).

The first 18 residues, 1–18 (MKIFLCLIAVVFLQGVVG), serve as a signal peptide directing secretion. The N-linked (GlcNAc...) asparagine glycan is linked to Asn29.

It belongs to the major royal jelly protein family. In terms of tissue distribution, female salivary gland (at protein level).

The protein localises to the secreted. Probably modulates blood feeding of sand flies on vertebrate species by binding and sequestering different mediators involved in the host response. Binds biogenic amines. Binds serotonin with high affinity. Poorly binds histamine. Does not bind dopamine, noradrenaline, adrenaline and octopamine. The protein is Yellow-related salivary protein SP03B of Phlebotomus perniciosus (Phlebotomine sand fly).